The chain runs to 378 residues: MTTQFSVAGVELELLRYPTQQESNLQAWDAADEHLLKSLIESEQAAVPTAIINDSFGALSCGLSKLHPSWPLFVETDARTSFLGTEQNHGRNQLPMDNLQWFTSRDTLPENLALVLMKLPKNLSYFAHQLTRLSQVLPASTRVLVAAKSKSINSALLDIFAKHLGPASASLAWKNTRVITCVSDGKPRPLAKEVTWAIPEYQLEISNLSNVFAANKLDIGARIMLENLPKGDFKSIVDLGCGNGVLGLRTAQLFPEADIHFIDDSEMAVASAKANWARNQLPTDKGHFYWDDCMTHLPDDVQPDLVLCNPPFHQGEAITDHIAWQMFLDARRRLKEGGILHIVGNRHLAYHVKLQRLFKNCTTVASNGKFVILQAQKK.

Belongs to the methyltransferase superfamily. RlmG family.

The protein localises to the cytoplasm. The catalysed reaction is guanosine(1835) in 23S rRNA + S-adenosyl-L-methionine = N(2)-methylguanosine(1835) in 23S rRNA + S-adenosyl-L-homocysteine + H(+). Specifically methylates the guanine in position 1835 (m2G1835) of 23S rRNA. The chain is Ribosomal RNA large subunit methyltransferase G from Shewanella sp. (strain W3-18-1).